A 204-amino-acid polypeptide reads, in one-letter code: Guanine-specific ADP-ribosyl transferase (204 aa).

A signal peptide spans 1 to 42 (MITTSLRRRTAAAVLSLSAVLATTAATAPGAAPAPSAAPAKA). A disulfide bond links C46 and C76. NADH is bound by residues 81-85 (RSDSR) and K98. GDP-binding positions include 111 to 114 (VLVN), 132 to 134 (WYK), W159, and Q162. A PN (phosphate-nicotinamide) loop motif is present at residues 132–136 (WYKSG). Cysteines 180 and 194 form a disulfide.

This sequence belongs to the pierisin ADP-ribosyltransferase family. In terms of assembly, monomer.

Its subcellular location is the secreted. It carries out the reaction guanosine + NAD(+) = N(2)-(ADP-D-ribosyl)-guanosine + nicotinamide + H(+). The catalysed reaction is a 2'-deoxyguanosine in DNA + NAD(+) = an N(2)-(ADP-L-ribosyl)-2'-deoxyguanosine in DNA + nicotinamide + H(+). It catalyses the reaction 2'-deoxyguanosine + NAD(+) = N(2)-(ADP-D-ribosyl)-2'-deoxyguanosine + nicotinamide + H(+). The enzyme catalyses GMP + NAD(+) = N(2)-(ADP-D-ribosyl)-GMP + nicotinamide + H(+). It carries out the reaction GTP + NAD(+) = N(2)-(ADP-D-ribosyl)-GTP + nicotinamide + H(+). The catalysed reaction is dGMP + NAD(+) = N(2)-(ADP-D-ribosyl)-dGMP + nicotinamide + H(+). It catalyses the reaction dGTP + NAD(+) = N(2)-(ADP-D-ribosyl)-dGTP + nicotinamide + H(+). The enzyme catalyses 3',5'-cyclic GMP + NAD(+) = N(2)-(ADP-D-ribosyl)-3',5'-cyclic GMP + nicotinamide + H(+). It carries out the reaction guanine + NAD(+) = N(2)-(ADP-D-ribosyl)-guanine + nicotinamide + H(+). The catalysed reaction is GDP + NAD(+) = N(2)-(ADP-D-ribosyl)-GDP + nicotinamide + H(+). With respect to regulation, inhibited by NADH. Functionally, ADP-ribosylates the N2 amino group of guanosine, deoxyguanosine, GMP, dGMP, cGMP, GTP and dGTP; oligo-guanosine, oligo-deoxyguanosine and tRNA are ADP-ribosylated less efficiently, while dsDNA is a very poor substrate. Also acts on GDP. The polypeptide is Guanine-specific ADP-ribosyl transferase (Streptomyces coelicolor (strain ATCC BAA-471 / A3(2) / M145)).